Consider the following 283-residue polypeptide: Bifunctional protein FolD (283 aa).

Residues 166–168 (GRS) and Ser-191 each bind NADP(+).

This sequence belongs to the tetrahydrofolate dehydrogenase/cyclohydrolase family. In terms of assembly, homodimer.

The enzyme catalyses (6R)-5,10-methylene-5,6,7,8-tetrahydrofolate + NADP(+) = (6R)-5,10-methenyltetrahydrofolate + NADPH. It carries out the reaction (6R)-5,10-methenyltetrahydrofolate + H2O = (6R)-10-formyltetrahydrofolate + H(+). It participates in one-carbon metabolism; tetrahydrofolate interconversion. Catalyzes the oxidation of 5,10-methylenetetrahydrofolate to 5,10-methenyltetrahydrofolate and then the hydrolysis of 5,10-methenyltetrahydrofolate to 10-formyltetrahydrofolate. The chain is Bifunctional protein FolD from Pediococcus pentosaceus (strain ATCC 25745 / CCUG 21536 / LMG 10740 / 183-1w).